The following is a 279-amino-acid chain: Methyltransferase ausD (279 aa).

S-adenosyl-L-methionine-binding positions include 124–125 (DL), 152–153 (DI), and arginine 244.

This sequence belongs to the class I-like SAM-binding methyltransferase superfamily. In terms of assembly, homodimer.

Its pathway is secondary metabolite biosynthesis; terpenoid biosynthesis. Methyltransferase; part of the gene cluster that mediates the biosynthesis of calidodehydroaustin, a fungal meroterpenoid. The first step of the pathway is the synthesis of 3,5-dimethylorsellinic acid by the polyketide synthase ausA. 3,5-dimethylorsellinic acid is then prenylated by the polyprenyl transferase ausN. Further epoxidation by the FAD-dependent monooxygenase ausM and cyclization by the probable terpene cyclase ausL lead to the formation of protoaustinoid A. Protoaustinoid A is then oxidized to spiro-lactone preaustinoid A3 by the combined action of the FAD-binding monooxygenases ausB and ausC, and the dioxygenase ausE. Acid-catalyzed keto-rearrangement and ring contraction of the tetraketide portion of preaustinoid A3 by ausJ lead to the formation of preaustinoid A4. The aldo-keto reductase ausK, with the help of ausH, is involved in the next step by transforming preaustinoid A4 into isoaustinone which is in turn hydroxylated by the P450 monooxygenase ausI to form austinolide. The cytochrome P450 monooxygenase ausG modifies austinolide to austinol. Austinol is further acetylated to austin by the O-acetyltransferase ausP, which spontaneously changes to dehydroaustin. The cytochrome P450 monooxygenase ausR then converts dehydroaustin is into 7-dehydrodehydroaustin. The hydroxylation catalyzed by ausR permits the O-acetyltransferase ausQ to add an additional acetyl group to the molecule, leading to the formation of acetoxydehydroaustin. The short chain dehydrogenase ausT catalyzes the reduction of the double bond present between carbon atoms 1 and 2 to convert 7-dehydrodehydroaustin into 1,2-dihydro-7-hydroxydehydroaustin. AusQ catalyzes not only an acetylation reaction but also the addition of the PKS ausV diketide product to 1,2-dihydro-7-hydroxydehydroaustin, forming precalidodehydroaustin. Finally, the iron/alpha-ketoglutarate-dependent dioxygenase converts precalidodehydroaustin into calidodehydroaustin. This is Methyltransferase ausD from Aspergillus calidoustus.